The primary structure comprises 119 residues: Large ribosomal subunit protein bL20 (119 aa).

It belongs to the bacterial ribosomal protein bL20 family. As to quaternary structure, part of the 50S ribosomal subunit.

Functionally, binds directly to 23S ribosomal RNA and is necessary for the in vitro assembly process of the 50S ribosomal subunit. It is not involved in the protein synthesizing functions of that subunit. In Bacillus subtilis (strain 168), this protein is Large ribosomal subunit protein bL20 (rplT).